We begin with the raw amino-acid sequence, 506 residues long: Maturase K (506 aa).

Belongs to the intron maturase 2 family. MatK subfamily.

The protein resides in the plastid. It is found in the chloroplast. Functionally, usually encoded in the trnK tRNA gene intron. Probably assists in splicing its own and other chloroplast group II introns. This Uncarina grandidieri (Mouse trap tree) protein is Maturase K.